A 237-amino-acid polypeptide reads, in one-letter code: UPF0053 inner membrane protein YgdQ (237 aa).

The Periplasmic segment spans residues 1 to 17 (MLFAWITDPNAWLALGT). A helical transmembrane segment spans residues 18–38 (LTLLEIVLGIDNIIFLSLVVA). Residues 39–50 (KLPTAQRAHARR) are Cytoplasmic-facing. The helical transmembrane segment at 51 to 71 (LGLAGAMVMRLALLASIAWVT) threads the bilayer. At 72–79 (RLTNPLFT) the chain is on the periplasmic side. Residues 80 to 100 (IFSQEISARDLILLLGGLFLI) form a helical membrane-spanning segment. The Cytoplasmic portion of the chain corresponds to 101 to 124 (WKASKEIHESIEGEEEGLKTRVSS). The chain crosses the membrane as a helical span at residues 125–145 (FLGAIVQIMLLDIIFSLDSVI). Residues 146-151 (TAVGLS) lie on the Periplasmic side of the membrane. A helical membrane pass occupies residues 152–172 (DHLFIMMAAVVIAVGVMMFAA). Residues 173 to 186 (RSIGDFVERHPSVK) lie on the Cytoplasmic side of the membrane. A helical membrane pass occupies residues 187-207 (MLALSFLILVGFTLILESFDI). At 208-209 (HV) the chain is on the periplasmic side. A helical transmembrane segment spans residues 210 to 230 (PKGYIYFAMFFSIAVESLNLI). Topologically, residues 231-237 (RNKKNPL) are cytoplasmic.

The protein belongs to the UPF0053 family.

The protein resides in the cell inner membrane. This is UPF0053 inner membrane protein YgdQ (ygdQ) from Escherichia coli O157:H7.